The primary structure comprises 189 residues: FUN14 domain-containing protein 2 (189 aa).

Residues 1 to 80 (METSAPRAGS…GQESGPSAEK (80 aa)) are Cytoplasmic-facing. Residues Ser-10 and Ser-53 each carry the phosphoserine modification. Residues 81-101 (YSVATQLFIGGVTGWCTGFIF) form a helical membrane-spanning segment. Residues 102-107 (QNVGKL) are Mitochondrial intermembrane-facing. A helical transmembrane segment spans residues 108–128 (AATAVGGGFFLLQLANHTGYI). The Cytoplasmic portion of the chain corresponds to 129–164 (KVDWQRVEKDMKKAKEQLKIRKSNQMPTEVRSKAEE). Position 151 is a phosphoserine (Ser-151). A helical membrane pass occupies residues 165 to 185 (VVSFVKKNVLVTGGFFGGFLL). The Mitochondrial intermembrane portion of the chain corresponds to 186-189 (GMAS).

This sequence belongs to the FUN14 family.

It is found in the mitochondrion outer membrane. It localises to the nucleus. Functionally, binds directly and specifically 1,2-Diacyl-sn-glycero-3-phospho-(1'-myo-inositol-3',4',5'-bisphosphate) (PIP3) leading to the recruitment of PIP3 to mitochondria and may play a role in the regulation of the platelet activation via AKT/GSK3B/cGMP signaling pathways. May act as transcription factor that regulates SREBP1 (isoform SREBP-1C) expression in order to modulate triglyceride (TG) homeostasis in hepatocytes. The protein is FUN14 domain-containing protein 2 of Macaca mulatta (Rhesus macaque).